The sequence spans 82 residues: Myosin light chain alkali (82 aa).

The 36-residue stretch at 7-42 folds into the EF-hand domain; sequence GCYEDFIECLKLYDKEENGTMLLAELQHALLALGEN.

In terms of assembly, myosin is a hexamer of 2 heavy chains and 4 light chains.

This Drosophila teissieri (Fruit fly) protein is Myosin light chain alkali (Mlc1).